The chain runs to 230 residues: uncharacterized protein (230 aa).

6 helical membrane-spanning segments follow: residues A4–L24, L30–F50, L67–V87, V91–F111, M148–L168, and M210–I230.

The protein belongs to the YohK (E.coli)/YwbG (IPA-22R) (B.subtilis) family.

Its subcellular location is the cell membrane. This is an uncharacterized protein from Bacillus subtilis (strain 168).